Reading from the N-terminus, the 184-residue chain is Shikimate kinase (184 aa).

An ATP-binding site is contributed by glycine 12–threonine 17. Serine 16 contributes to the Mg(2+) binding site. Residues aspartate 34, arginine 58, and glycine 80 each contribute to the substrate site. Arginine 117 contacts ATP. Residue arginine 136 coordinates substrate. Residue arginine 153 coordinates ATP. A disordered region spans residues serine 164 to threonine 184. The span at proline 169 to threonine 184 shows a compositional bias: low complexity.

The protein belongs to the shikimate kinase family. Monomer. Requires Mg(2+) as cofactor.

Its subcellular location is the cytoplasm. The enzyme catalyses shikimate + ATP = 3-phosphoshikimate + ADP + H(+). Its pathway is metabolic intermediate biosynthesis; chorismate biosynthesis; chorismate from D-erythrose 4-phosphate and phosphoenolpyruvate: step 5/7. In terms of biological role, catalyzes the specific phosphorylation of the 3-hydroxyl group of shikimic acid using ATP as a cosubstrate. The protein is Shikimate kinase of Mycobacterium ulcerans (strain Agy99).